Here is a 466-residue protein sequence, read N- to C-terminus: Tubulointerstitial nephritis antigen-like (466 aa).

The first 21 residues, 1-21, serve as a signal peptide directing secretion; that stretch reads MWGCWLGLLLLLLAGQAALEA. Residues 49-96 form the SMB domain; it reads EQDMCCRGRADECALPYLGATCYCDLFCNRTVSDCCPDFWDFCLGIPP. Cystine bridges form between C53-C72, C70-C72, C70-C84, C76-C83, and C84-C91. A glycan (N-linked (GlcNAc...) asparagine) is linked at N77. An N-linked (GlcNAc...) asparagine glycan is attached at N160.

This sequence belongs to the peptidase C1 family. Glycosylated. Highly expressed in kidney, heart and adrenocortical cells of adrenal glands. Moderately expressed in spleen and liver. Also found in prostate, seminal vesicle, epididymis and testis in male reproductive organs. In adrenal glands is found in the outer cortical regions corresponding to the zona glomerulosa (zG) and the undifferentiated cell zone (zU) (at protein level).

The protein localises to the secreted. Functionally, may be implicated in the adrenocortical zonation and in mechanisms for repressing the CYP11B1 gene expression in adrenocortical cells. This is a non catalytic peptidase C1 family protein. In Mus musculus (Mouse), this protein is Tubulointerstitial nephritis antigen-like (Tinagl1).